Here is a 258-residue protein sequence, read N- to C-terminus: Cholera enterotoxin subunit A (258 aa).

An N-terminal signal peptide occupies residues 1–18 (MVKIIFVFFIFLSSFSYA). NAD(+)-binding positions include 25–28 (RADS) and 41–43 (MPR). The active site involves Glu130. Cysteines 205 and 217 form a disulfide.

This sequence belongs to the enterotoxin A family. In terms of assembly, the holotoxin (choleragen) consists of a pentameric ring of B subunits whose central pore is occupied by the A subunit. The A subunit contains two chains, A1 and A2, linked by a disulfide bridge. Interaction with the host protein ARF6 causes a conformation change so that the enterotoxin subunit A1 can bind NAD and catalyze the ADP-ribosylation of the host Gs alpha.

In terms of biological role, the A1 chain catalyzes the ADP-ribosylation of Gs alpha, a GTP-binding regulatory protein, to activate the adenylate cyclase. This leads to an overproduction of cAMP and eventually to a hypersecretion of chloride and bicarbonate followed by water, resulting in the characteristic cholera stool. The A2 chain tethers A1 to the pentameric ring. The polypeptide is Cholera enterotoxin subunit A (ctxA) (Vibrio cholerae serotype O1 (strain ATCC 39315 / El Tor Inaba N16961)).